The chain runs to 277 residues: Large ribosomal subunit protein uL2 (277 aa).

The disordered stretch occupies residues 216–277 (RRPHNRGVAM…IIRRRKVGKG (62 aa)).

Belongs to the universal ribosomal protein uL2 family. In terms of assembly, part of the 50S ribosomal subunit. Forms a bridge to the 30S subunit in the 70S ribosome.

Functionally, one of the primary rRNA binding proteins. Required for association of the 30S and 50S subunits to form the 70S ribosome, for tRNA binding and peptide bond formation. It has been suggested to have peptidyltransferase activity; this is somewhat controversial. Makes several contacts with the 16S rRNA in the 70S ribosome. This is Large ribosomal subunit protein uL2 from Acidiphilium cryptum (strain JF-5).